The chain runs to 1122 residues: Telomerase reverse transcriptase (1122 aa).

Positions 1-239 (MTRAPRCPAV…TKRHLSLTST (239 aa)) are RNA-interacting domain 1. Residues 58–205 (MHWGSQPPPA…RPVGRNFTNL (148 aa)) form a GQ motif region. Positions 137–141 (WMLLL) are required for regulating specificity for telomeric DNA and for processivity for primer elongation. The interval 213–296 (SSSRQEAPKP…KDLSSKGKVS (84 aa)) is disordered. Positions 240 to 328 (SVPSAKKARC…PRQNAFQLRP (89 aa)) are linker. Residues 284 to 295 (TAEKDLSSKGKV) are compositionally biased toward basic and acidic residues. Residues 306 to 528 (CKHKPSSTSL…VPAAEHRLRE (223 aa)) form a required for oligomerization region. An RNA-interacting domain 2 region spans residues 329 to 540 (FIETRHFLYS…LATFLFWLMD (212 aa)). The TFLY; involved in RNA binding motif lies at 332–337 (TRHFLY). The interval 381–511 (LCRTHRLSRR…MKVEDCHWLR (131 aa)) is QFP motif. Residues 402 to 422 (LVNHAECQYVRLLRSHCRFRT) form a CP motif region. Position 447 is a phosphoserine; by DYRK2 (S447). In terms of domain architecture, Reverse transcriptase spans 595 to 928 (EVRHHQDTWL…CLFPWCGLLL (334 aa)). Position 697 is a phosphotyrosine; by SRC-type Tyr-kinases (Y697). Residues D702, D861, and D862 each coordinate Mg(2+). Residues 907–921 (LGGAAPYQLPAHCLF) are required for oligomerization. Positions 923 to 927 (WCGLL) are primer grip sequence. The CTE stretch occupies residues 929–1122 (DTQTLEVFCD…LSTDFQTILD (194 aa)).

This sequence belongs to the reverse transcriptase family. Telomerase subfamily. Catalytic component of the telomerase holoenzyme complex composed of one molecule of TERT, one molecule of WRAP53/TCAB1, two molecules of H/ACA ribonucleoprotein complex subunits DKC1, NOP10, NHP2 and GAR1, and a telomerase RNA template component (TERC). The telomerase holoenzyme complex is associated with TEP1, SMG6/EST1A and POT1. The molecular chaperone HSP90/P23 complex is required for correct assembly and stabilization of the active telomerase. Interacts directly with HSP90A and PTGES3. Interacts with HSPA1A; the interaction occurs in the absence of TERC and dissociates once the complex has formed. Interacts with RAN; the interaction promotes nuclear export of TERT. Interacts with XPO1. Interacts with PTPN11; the interaction retains TERT in the nucleus. Interacts with NCL (via RRM1 and C-terminal RRM4/Arg/Gly-rich domains); the interaction is important for nucleolar localization of TERT. Interacts with SMARCA4 (via the bromodomain); the interaction regulates Wnt-mediated signaling. Interacts with MCRS1 (isoform MCRS2); the interaction inhibits in vitro telomerase activity. Interacts with PIF1; the interaction has no effect on the elongation activity of TERT. Interacts with PML; the interaction recruits TERT to PML bodies and inhibits telomerase activity. Interacts with GNL3L. Interacts with isoform 1 and isoform 2 of NVL. Interacts with DHX36. Interacts with ATF7. Phosphorylation at Tyr-697 under oxidative stress leads to translocation of TERT to the cytoplasm and reduces its antiapoptotic activity. Dephosphorylated by SHP2/PTPN11 leading to nuclear retention. Phosphorylation by the AKT pathway promotes nuclear location. Phosphorylation at the G2/M phase at Ser-447 by DYRK2 promotes ubiquitination by the EDVP complex and degradation. In terms of processing, ubiquitinated by the EDVP complex, a E3 ligase complex following phosphorylation at Ser-447 by DYRK2. Ubiquitinated leads to proteasomal degradation. High activity in intestine, liver and testis, moderate in lung, very low in muscle, heart and brain.

It localises to the nucleus. The protein localises to the nucleolus. It is found in the nucleoplasm. Its subcellular location is the chromosome. The protein resides in the telomere. It localises to the cytoplasm. The protein localises to the PML body. The enzyme catalyses DNA(n) + a 2'-deoxyribonucleoside 5'-triphosphate = DNA(n+1) + diphosphate. Telomerase is a ribonucleoprotein enzyme essential for the replication of chromosome termini in most eukaryotes. Active in progenitor and cancer cells. Inactive, or very low activity, in normal somatic cells. Catalytic component of the teleromerase holoenzyme complex whose main activity is the elongation of telomeres by acting as a reverse transcriptase that adds simple sequence repeats to chromosome ends by copying a template sequence within the RNA component of the enzyme. Catalyzes the RNA-dependent extension of 3'-chromosomal termini with the 6-nucleotide telomeric repeat unit, 5'-TTAGGG-3'. The catalytic cycle involves primer binding, primer extension and release of product once the template boundary has been reached or nascent product translocation followed by further extension. More active on substrates containing 2 or 3 telomeric repeats. Telomerase activity is regulated by a number of factors including telomerase complex-associated proteins, chaperones and polypeptide modifiers. Modulates Wnt signaling. Plays important roles in aging and antiapoptosis. In Mus musculus (Mouse), this protein is Telomerase reverse transcriptase (Tert).